We begin with the raw amino-acid sequence, 137 residues long: ATP synthase epsilon chain, chloroplastic (137 aa).

Belongs to the ATPase epsilon chain family. As to quaternary structure, F-type ATPases have 2 components, CF(1) - the catalytic core - and CF(0) - the membrane proton channel. CF(1) has five subunits: alpha(3), beta(3), gamma(1), delta(1), epsilon(1). CF(0) has three main subunits: a, b and c.

Its subcellular location is the plastid. The protein localises to the chloroplast thylakoid membrane. In terms of biological role, produces ATP from ADP in the presence of a proton gradient across the membrane. In Bigelowiella natans (Pedinomonas minutissima), this protein is ATP synthase epsilon chain, chloroplastic.